We begin with the raw amino-acid sequence, 115 residues long: Con-Ins G1b (115 aa).

An N-terminal signal peptide occupies residues 1–24 (MTTSFYFLLMALGLLLYVCQSSFG). Residues 25–29 (NQHTR) constitute a propeptide that is removed on maturation. Proline 34 is subject to 4-hydroxyproline; partial. 3 disulfide bridges follow: cysteine 38–cysteine 101, cysteine 50–cysteine 114, and cysteine 100–cysteine 105. Residue glutamate 41 is modified to 4-carboxyglutamate. Residues 52–94 (RKRNDAGEKRGRASPLWQRRGFLSKLKARAKRNGAFHLPRDGR) constitute a propeptide, c peptide. At glutamate 98 the chain carries 4-carboxyglutamate. The residue at position 104 (proline 104) is a 4-hydroxyproline; partial. Glutamate 109 carries the post-translational modification 4-carboxyglutamate; partial. Cysteine 114 bears the Cysteine amide mark.

It belongs to the insulin family. As to quaternary structure, heterodimer of A and B chains; disulfide-linked. Expressed by the venom gland.

It localises to the secreted. This venom insulin, from a fish-hunting cone snail, facilitates prey capture by rapidly inducing hypoglycemic shock. It is one of the smallest known insulin found in nature and lacks the C-terminal segment of the B chain that, in human insulin, mediates engagement of the insulin receptor (INSR) and assembly of the hormone's hexameric storage form. Despite lacking this segment, it both binds and activates human insulin receptor (long isoform (HIR-B) of INSR) with only a 10-fold lower potency. In vivo, intraperitoneal injection of this peptide into zebrafish lowers blood glucose with the same potency than human insulin. In addition, when applied to water, this peptide reduces overall locomotor activity of zebrafish larvae, observed as a significant decrease in the percentage of time spent swimming and movement frequency. This is Con-Ins G1b from Conus geographus (Geography cone).